A 296-amino-acid chain; its full sequence is Protein csh3 (296 aa).

The disordered stretch occupies residues 46 to 138; sequence ASPVTAPAAQ…PPSYPGPNTA (93 aa). The segment covering 93-103 has biased composition (basic and acidic residues); the sequence is GEKRTPEEPRK. Residues 111–124 show a composition bias toward polar residues; the sequence is QKQSEASSVNSSTE. Residues 140–199 form the SH3 domain; it reads KNVERVLAMYDFPGPDAGDLGFHAGEVIIVLEHVNNDWWRGELNGKEGIFPSNYVRLLED. The segment at 202 to 246 is disordered; it reads VKAQPPPPPPQQNYPPAASSSAPPMQYQQTAYPPQQAPYPPVQAY. Residues 205-214 show a composition bias toward pro residues; it reads QPPPPPPQQN. Low complexity predominate over residues 215–235; the sequence is YPPAASSSAPPMQYQQTAYPP.

This Schizosaccharomyces pombe (strain 972 / ATCC 24843) (Fission yeast) protein is Protein csh3 (csh3).